A 155-amino-acid chain; its full sequence is MDATLPFLILYACLSVLLFLWDAKHGLLPDRFTCPLLWSGLLFSQVCNPDCLADALWGAIIGYGTFAVIYWGYRILRHKEGLGYGDVKFLAALGAWHTWTFLPRLVFLAASFACGAVVVGLLMRGKESLKNPLPFGPFLAAAGFVVGWDSLLAGR.

The protein belongs to the peptidase A24 family.

This Escherichia coli protein is Leader peptidase HopD (hopD).